Consider the following 192-residue polypeptide: Interleukin-18 (192 aa).

The propeptide occupies Met-1–Asp-35.

Belongs to the IL-1 family. Forms a ternary complex with ligand-binding receptor subunit IL18R1 and signaling receptor subunit IL18RAP at the plasma membrane. Mature IL18 first binds to IL18R1 forming a low affinity binary complex, which then interacts with IL18RAP to form a high affinity ternary complex that signals inside the cell. Interacts with cargo receptor TMED10; the interaction mediates the translocation from the cytoplasm into the ERGIC (endoplasmic reticulum-Golgi intermediate compartment) and thereby secretion. In terms of processing, the pro-IL-18 precursor is processed by CASP1 to yield its mature, active form. The pro-IL-18 precursor is however not processed by Casp4/Casp11 in rodents. The pro-IL-18 precursor features autoinhibitory interactions between the propeptide and the post-cleavage-site region, preventing recognition by the IL18R1 receptor. Processing by CASP1 induces conformational changes to generate critical receptor-binding sites. The mature form is then secreted and released in the extracellular milieu by passing through the gasdermin-D (GSDMD) pore. In contrast, cleavage by CASP3 inactivates IL18.

The protein localises to the cytoplasm. It is found in the secreted. Its function is as follows. Pro-inflammatory cytokine primarily involved in epithelial barrier repair, polarized T-helper 1 (Th1) cell and natural killer (NK) cell immune responses. Upon binding to IL18R1 and IL18RAP, forms a signaling ternary complex which activates NF-kappa-B, triggering synthesis of inflammatory mediators. Synergizes with IL12/interleukin-12 to induce IFNG synthesis from T-helper 1 (Th1) cells and natural killer (NK) cells. Involved in transduction of inflammation downstream of pyroptosis: its mature form is specifically released in the extracellular milieu by passing through the gasdermin-D (GSDMD) pore. In Mus musculus (Mouse), this protein is Interleukin-18.